Consider the following 504-residue polypeptide: Melianol synthase CYP71BQ5 (504 aa).

Residues 2 to 22 (EFRLPSLPVFLSFLLFFLMLV) form a helical membrane-spanning segment. Cys442 lines the heme pocket.

Belongs to the cytochrome P450 family. Heme is required as a cofactor. Mainly expressed in fruits and leaves.

The protein localises to the membrane. The enzyme catalyses dihydroniloticin + 2 reduced [NADPH--hemoprotein reductase] + 2 O2 = melianol + 2 oxidized [NADPH--hemoprotein reductase] + 3 H2O + 2 H(+). The protein operates within secondary metabolite biosynthesis; terpenoid biosynthesis. In terms of biological role, monooxygenase involved in the biosynthesis of limonoids triterpene natural products such as azadirachtin, an antifeedant widely used as bioinsecticide, and possessing many medicinal applications including anti-tumoral, anti-malarial, anti-rheumatic, antibacterial, anti-inflammatory, anti-pyretic and diuretic effects. Catalyzes the conversion of dihydroniloticin to the protolimonoid melianol. The chain is Melianol synthase CYP71BQ5 from Azadirachta indica (Neem tree).